The following is a 36-amino-acid chain: Asteropin-A (36 aa).

Disulfide bonds link cysteine 2–cysteine 18, cysteine 9–cysteine 25, and cysteine 17–cysteine 35.

Functionally, sialidase inhibitor. Competitively inhibits bacterial sialidases, but not viral sialidases. Does not inhibit glycosidases or proteases. Has no antitumor activity. This Asteropus simplex (Marine sponge) protein is Asteropin-A.